A 530-amino-acid polypeptide reads, in one-letter code: Per os infectivity factor 1 (530 aa).

The signal sequence occupies residues 1-15 (MHFAIILLFLLVIIA).

In terms of assembly, forms the PIF complex together with PIF2 and PIF3. The complex also interacts with per os infectivity factor PIF0.

It is found in the virion membrane. Functionally, per os infectivity factor that mediates the specific binding of occluded virions (ODV) to the host midgut target cells. In Autographa californica nuclear polyhedrosis virus (AcMNPV), this protein is Per os infectivity factor 1.